A 396-amino-acid chain; its full sequence is Obg-like ATPase 1 (396 aa).

Residues 23–283 (LKIGIVGLPN…LSAEERQKYL (261 aa)) form the OBG-type G domain. 32 to 37 (NVGKST) contributes to the ATP binding site. Residues serine 36 and threonine 56 each coordinate Mg(2+). Leucine 231 contributes to the ATP binding site. The Nuclear export signal signature appears at 267 to 274 (LELKLQEL). Lysine 294 is modified (N6-acetyllysine). Residues 304-387 (QLEYFFTAGP…EDGDIIFFKF (84 aa)) form the TGS domain.

The protein belongs to the TRAFAC class OBG-HflX-like GTPase superfamily. OBG GTPase family. YchF/OLA1 subfamily. As to quaternary structure, monomer. Mg(2+) serves as cofactor. In terms of tissue distribution, expressed in all tissues tested but its expression is more abundant in testis, liver, lung, and brain. Overexpressed in several malignancies, including cancers of the colon, rectum, ovary, lung, stomach, and uterus.

The protein localises to the cytoplasm. It is found in the nucleus. The protein resides in the nucleolus. In terms of biological role, hydrolyzes ATP, and can also hydrolyze GTP with lower efficiency. Has lower affinity for GTP. This Homo sapiens (Human) protein is Obg-like ATPase 1.